We begin with the raw amino-acid sequence, 421 residues long: 4-hydroxy-3-methylbut-2-en-1-yl diphosphate synthase (flavodoxin) (421 aa).

The disordered stretch occupies residues 1–20; it reads MHDAVTRPTPPSDATSWPRR. Cys-311, Cys-314, Cys-357, and Glu-364 together coordinate [4Fe-4S] cluster.

Belongs to the IspG family. The cofactor is [4Fe-4S] cluster.

It carries out the reaction (2E)-4-hydroxy-3-methylbut-2-enyl diphosphate + oxidized [flavodoxin] + H2O + 2 H(+) = 2-C-methyl-D-erythritol 2,4-cyclic diphosphate + reduced [flavodoxin]. It participates in isoprenoid biosynthesis; isopentenyl diphosphate biosynthesis via DXP pathway; isopentenyl diphosphate from 1-deoxy-D-xylulose 5-phosphate: step 5/6. Functionally, converts 2C-methyl-D-erythritol 2,4-cyclodiphosphate (ME-2,4cPP) into 1-hydroxy-2-methyl-2-(E)-butenyl 4-diphosphate. The protein is 4-hydroxy-3-methylbut-2-en-1-yl diphosphate synthase (flavodoxin) of Stenotrophomonas maltophilia (strain R551-3).